The chain runs to 369 residues: Delta(6)-protoilludene synthase STEHIDRAFT_73029 (369 aa).

4 residues coordinate Mg(2+): Asp107, Asn243, Ser247, and Glu251. A D(D/E)XX(D/E) motif motif is present at residues 107 to 111 (DEYSD). Residues 243–251 (NDIVSYNLE) carry the NSE motif motif. (2E,6E)-farnesyl diphosphate-binding residues include Arg333 and Tyr334.

Belongs to the terpene synthase family. The cofactor is Mg(2+). It depends on Mn(2+) as a cofactor. Ca(2+) is required as a cofactor. Ni(2+) serves as cofactor. Requires Co(2+) as cofactor.

It catalyses the reaction (2E,6E)-farnesyl diphosphate = Delta(6)-protoilludene + diphosphate. It carries out the reaction (2E,6E)-farnesyl diphosphate = alpha-selinene + diphosphate. With respect to regulation, ca(2+) switches the cyclization mechanism of delta(6)-protoilludene synthase from 1,11 to 1,10 cyclization which leads to the production of beta-elemene. Terpene cyclase that catalyzes the cyclization of farnesyl diphosphate (FPP) to delta(6)-protoilludene. In presence of Ca(2+), a significant switch from 1,11 to a dual 1,11/1,10 cyclization occurs, producing beta-elemene as the major product, with lower levels of delta(6)-protoilludene and (E)-beta-caryophyllene, and traces of beta-selinene and alpha-selinene. This chain is Delta(6)-protoilludene synthase STEHIDRAFT_73029, found in Stereum hirsutum (strain FP-91666) (White-rot fungus).